A 143-amino-acid chain; its full sequence is Heat shock protein Hsp-16.41 (143 aa).

The 106-residue stretch at 35–140 folds into the sHSP domain; it reads HNSFNFSDNI…SSRSIPINFV (106 aa).

This sequence belongs to the small heat shock protein (HSP20) family.

This is Heat shock protein Hsp-16.41 (hsp-16.41) from Caenorhabditis elegans.